A 122-amino-acid chain; its full sequence is MSITRKEILDAISEMSIKNIMKLISNIEKKFNISSNISLNSTQTIQEKVPEEKTAFTVKLNAIGPNKVAIIKIIRSTTGLGLKESKDLVESAPTIIKENINKQDAESLKKNLIDSGAEAEIT.

The protein belongs to the bacterial ribosomal protein bL12 family. Homodimer. Part of the ribosomal stalk of the 50S ribosomal subunit. Forms a multimeric L10(L12)X complex, where L10 forms an elongated spine to which 2 to 4 L12 dimers bind in a sequential fashion. Binds GTP-bound translation factors.

In terms of biological role, forms part of the ribosomal stalk which helps the ribosome interact with GTP-bound translation factors. Is thus essential for accurate translation. The protein is Large ribosomal subunit protein bL12 of Buchnera aphidicola subsp. Cinara cedri (strain Cc).